A 604-amino-acid polypeptide reads, in one-letter code: Glutamine--fructose-6-phosphate aminotransferase [isomerizing] (604 aa).

The active-site Nucleophile; for GATase activity is cysteine 2. In terms of domain architecture, Glutamine amidotransferase type-2 spans 2 to 218; the sequence is CGIVGVVGNR…DKELVILTKD (217 aa). SIS domains are found at residues 284 to 423 and 456 to 594; these read IVKT…ANGK and VEKL…VDKP. The active-site For Fru-6P isomerization activity is the lysine 599.

As to quaternary structure, homodimer.

It is found in the cytoplasm. The enzyme catalyses D-fructose 6-phosphate + L-glutamine = D-glucosamine 6-phosphate + L-glutamate. Functionally, catalyzes the first step in hexosamine metabolism, converting fructose-6P into glucosamine-6P using glutamine as a nitrogen source. The chain is Glutamine--fructose-6-phosphate aminotransferase [isomerizing] from Streptococcus pyogenes serotype M6 (strain ATCC BAA-946 / MGAS10394).